The primary structure comprises 529 residues: Bifunctional purine biosynthesis protein PurH (529 aa).

Residues 2-149 form the MGS-like domain; that stretch reads TDLSPVRRAL…KNHAFVNVVV (148 aa).

This sequence belongs to the PurH family.

The catalysed reaction is (6R)-10-formyltetrahydrofolate + 5-amino-1-(5-phospho-beta-D-ribosyl)imidazole-4-carboxamide = 5-formamido-1-(5-phospho-D-ribosyl)imidazole-4-carboxamide + (6S)-5,6,7,8-tetrahydrofolate. It carries out the reaction IMP + H2O = 5-formamido-1-(5-phospho-D-ribosyl)imidazole-4-carboxamide. It participates in purine metabolism; IMP biosynthesis via de novo pathway; 5-formamido-1-(5-phospho-D-ribosyl)imidazole-4-carboxamide from 5-amino-1-(5-phospho-D-ribosyl)imidazole-4-carboxamide (10-formyl THF route): step 1/1. Its pathway is purine metabolism; IMP biosynthesis via de novo pathway; IMP from 5-formamido-1-(5-phospho-D-ribosyl)imidazole-4-carboxamide: step 1/1. The polypeptide is Bifunctional purine biosynthesis protein PurH (Ruegeria pomeroyi (strain ATCC 700808 / DSM 15171 / DSS-3) (Silicibacter pomeroyi)).